Reading from the N-terminus, the 883-residue chain is Protein P (883 aa).

The terminal protein domain (TP) stretch occupies residues 1 to 183; it reads MHPFSRLFRN…GKPYSWEHRQ (183 aa). Positions 184 to 386 are spacer; sequence LVQHNGQQHK…YCIHHIVSSL (203 aa). Residues 298–344 form a disordered region; the sequence is RNSGHTTWFSSASNSNKSRSREKAYSSNSTSKRYSPPLNYEKSDFSS. The polymerase/reverse transcriptase domain (RT) stretch occupies residues 387–728; the sequence is DDWGPCTVTG…YEELWPVVRQ (342 aa). A Reverse transcriptase domain is found at 397–638; it reads DVTIKSPRTP…NHLHFMGYVI (242 aa). Mg(2+) is bound by residues Asp469, Asp589, and Asp590.

This sequence belongs to the hepadnaviridae P protein family.

The enzyme catalyses DNA(n) + a 2'-deoxyribonucleoside 5'-triphosphate = DNA(n+1) + diphosphate. It catalyses the reaction Endonucleolytic cleavage to 5'-phosphomonoester.. Activated by host HSP70 and HSP40 in vitro to be able to bind the epsilon loop of the pgRNA. Because deletion of the RNase H region renders the protein partly chaperone-independent, the chaperones may be needed indirectly to relieve occlusion of the RNA-binding site by this domain. Inhibited by several reverse-transcriptase inhibitors: Lamivudine, Adefovir and Entecavir. Functionally, multifunctional enzyme that converts the viral RNA genome into dsDNA in viral cytoplasmic capsids. This enzyme displays a DNA polymerase activity that can copy either DNA or RNA templates, and a ribonuclease H (RNase H) activity that cleaves the RNA strand of RNA-DNA heteroduplexes in a partially processive 3'- to 5'-endonucleasic mode. Neo-synthesized pregenomic RNA (pgRNA) are encapsidated together with the P protein, and reverse-transcribed inside the nucleocapsid. Initiation of reverse-transcription occurs first by binding the epsilon loop on the pgRNA genome, and is initiated by protein priming, thereby the 5'-end of (-)DNA is covalently linked to P protein. Partial (+)DNA is synthesized from the (-)DNA template and generates the relaxed circular DNA (RC-DNA) genome. After budding and infection, the RC-DNA migrates in the nucleus, and is converted into a plasmid-like covalently closed circular DNA (cccDNA). The activity of P protein does not seem to be necessary for cccDNA generation, and is presumably released from (+)DNA by host nuclear DNA repair machinery. The chain is Protein P from Woodchuck hepatitis B virus (isolate 2) (WHV).